Reading from the N-terminus, the 92-residue chain is Long neurotoxin 1 (92 aa).

The N-terminal stretch at 1–21 (MKTLLLTLVVVTIVCLDLGYT) is a signal peptide. Disulfide bonds link C24–C42, C35–C63, C67–C79, and C80–C85.

Belongs to the three-finger toxin family. Long-chain subfamily. Type II alpha-neurotoxin sub-subfamily. As to expression, expressed by the venom gland.

It localises to the secreted. Its function is as follows. Binds with high affinity to muscular (alpha-1/CHRNA1) and neuronal (alpha-7/CHRNA7) nicotinic acetylcholine receptor (nAChR) and inhibits acetylcholine from binding to the receptor, thereby impairing neuromuscular and neuronal transmission. The protein is Long neurotoxin 1 of Oxyuranus scutellatus scutellatus (Australian taipan).